A 129-amino-acid polypeptide reads, in one-letter code: Small ribosomal subunit protein uS11 (129 aa).

The protein belongs to the universal ribosomal protein uS11 family. In terms of assembly, part of the 30S ribosomal subunit. Interacts with proteins S7 and S18. Binds to IF-3.

Located on the platform of the 30S subunit, it bridges several disparate RNA helices of the 16S rRNA. Forms part of the Shine-Dalgarno cleft in the 70S ribosome. The sequence is that of Small ribosomal subunit protein uS11 from Salmonella typhi.